A 357-amino-acid chain; its full sequence is U5 small nuclear ribonucleoprotein 40 kDa protein (357 aa).

Lys18 is covalently cross-linked (Glycyl lysine isopeptide (Lys-Gly) (interchain with G-Cter in SUMO2)). At Arg21 the chain carries Asymmetric dimethylarginine. WD repeat units lie at residues 64 to 103 (GHEGEVYCCKFHPNGSTLASAGFDRLILLWNVYGDCDNYA), 107 to 146 (GHSGAVMELHYNTDGSMLFSASTDKTVAVWDSETGERVKR), 149 to 189 (GHTS…AIQT), 191 to 230 (QNTYQVLAVTFNDTSDQIISGGIDNDIKVWDLRQNKLTYT), 233 to 272 (GHADSVTGLSLSSEGSYLLSNAMDNTVRVWDVRPFAPKER), 283 to 322 (NFEKNLLRCSWSPDGSKIAAGSADRFVYVWDTTSRRILYK), and 325 to 357 (GHAGSINEVAFHPDEPIIISASSDKRLYMGEIQ). Residue Lys270 forms a Glycyl lysine isopeptide (Lys-Gly) (interchain with G-Cter in SUMO2) linkage.

In terms of assembly, component of the pre-catalytic and catalytic spliceosome complexes. Component of the postcatalytic spliceosome P complex. Part of the U5 snRNP complex. Interacts with PRPF8. Component of the U4/U6-U5 tri-snRNP complex composed of the U4, U6 and U5 snRNAs and at least PRPF3, PRPF4, PRPF6, PRPF8, PRPF31, SNRNP200, TXNL4A, WDR57, SNRNP40, DDX23, CD2BP2, PPIH, SNU13, EFTUD2, SART1 and USP39. Component of the minor spliceosome, which splices U12-type introns.

It is found in the nucleus. Its function is as follows. Required for pre-mRNA splicing as component of the activated spliceosome. Component of the U5 small nuclear ribonucleoprotein (snRNP) complex and the U4/U6-U5 tri-snRNP complex, building blocks of the spliceosome. As a component of the minor spliceosome, involved in the splicing of U12-type introns in pre-mRNAs. This is U5 small nuclear ribonucleoprotein 40 kDa protein (SNRNP40) from Homo sapiens (Human).